The following is a 236-amino-acid chain: Phosphatidylserine decarboxylase proenzyme (236 aa).

The Schiff-base intermediate with substrate; via pyruvic acid role is filled by Ser203. Ser203 carries the pyruvic acid (Ser); by autocatalysis modification.

The protein belongs to the phosphatidylserine decarboxylase family. PSD-A subfamily. In terms of assembly, heterodimer of a large membrane-associated beta subunit and a small pyruvoyl-containing alpha subunit. It depends on pyruvate as a cofactor. Is synthesized initially as an inactive proenzyme. Formation of the active enzyme involves a self-maturation process in which the active site pyruvoyl group is generated from an internal serine residue via an autocatalytic post-translational modification. Two non-identical subunits are generated from the proenzyme in this reaction, and the pyruvate is formed at the N-terminus of the alpha chain, which is derived from the carboxyl end of the proenzyme. The post-translation cleavage follows an unusual pathway, termed non-hydrolytic serinolysis, in which the side chain hydroxyl group of the serine supplies its oxygen atom to form the C-terminus of the beta chain, while the remainder of the serine residue undergoes an oxidative deamination to produce ammonia and the pyruvoyl prosthetic group on the alpha chain.

It localises to the cell membrane. It catalyses the reaction a 1,2-diacyl-sn-glycero-3-phospho-L-serine + H(+) = a 1,2-diacyl-sn-glycero-3-phosphoethanolamine + CO2. Its pathway is phospholipid metabolism; phosphatidylethanolamine biosynthesis; phosphatidylethanolamine from CDP-diacylglycerol: step 2/2. Catalyzes the formation of phosphatidylethanolamine (PtdEtn) from phosphatidylserine (PtdSer). This is Phosphatidylserine decarboxylase proenzyme from Saccharopolyspora erythraea (strain ATCC 11635 / DSM 40517 / JCM 4748 / NBRC 13426 / NCIMB 8594 / NRRL 2338).